The primary structure comprises 352 residues: tRNA pseudouridine synthase D (352 aa).

The active-site Nucleophile is the Asp-81. Residues 158–306 (GVPNYFGQQR…RHERRTLLLK (149 aa)) form the TRUD domain.

The protein belongs to the pseudouridine synthase TruD family.

It catalyses the reaction uridine(13) in tRNA = pseudouridine(13) in tRNA. In terms of biological role, responsible for synthesis of pseudouridine from uracil-13 in transfer RNAs. This chain is tRNA pseudouridine synthase D, found in Photobacterium profundum (strain SS9).